The chain runs to 156 residues: 6,7-dimethyl-8-ribityllumazine synthase (156 aa).

5-amino-6-(D-ribitylamino)uracil is bound by residues phenylalanine 22, 57–59 (AYE), and 81–83 (TVI). 86-87 (GT) is a binding site for (2S)-2-hydroxy-3-oxobutyl phosphate. Histidine 89 functions as the Proton donor in the catalytic mechanism. Phenylalanine 114 contacts 5-amino-6-(D-ribitylamino)uracil. Arginine 128 provides a ligand contact to (2S)-2-hydroxy-3-oxobutyl phosphate.

Belongs to the DMRL synthase family. In terms of assembly, forms an icosahedral capsid composed of 60 subunits, arranged as a dodecamer of pentamers.

It carries out the reaction (2S)-2-hydroxy-3-oxobutyl phosphate + 5-amino-6-(D-ribitylamino)uracil = 6,7-dimethyl-8-(1-D-ribityl)lumazine + phosphate + 2 H2O + H(+). It functions in the pathway cofactor biosynthesis; riboflavin biosynthesis; riboflavin from 2-hydroxy-3-oxobutyl phosphate and 5-amino-6-(D-ribitylamino)uracil: step 1/2. Functionally, catalyzes the formation of 6,7-dimethyl-8-ribityllumazine by condensation of 5-amino-6-(D-ribitylamino)uracil with 3,4-dihydroxy-2-butanone 4-phosphate. This is the penultimate step in the biosynthesis of riboflavin. The chain is 6,7-dimethyl-8-ribityllumazine synthase from Salmonella agona (strain SL483).